The sequence spans 606 residues: Aspartate--tRNA(Asp/Asn) ligase (606 aa).

Glu187 provides a ligand contact to L-aspartate. The aspartate stretch occupies residues 211–214 (QQFK). Arg233 and His461 together coordinate L-aspartate. 233–235 (RDE) is a binding site for ATP. Glu495 lines the ATP pocket. Arg502 lines the L-aspartate pocket. 547–550 (GLDR) is an ATP binding site.

The protein belongs to the class-II aminoacyl-tRNA synthetase family. Type 1 subfamily. Homodimer.

It is found in the cytoplasm. It catalyses the reaction tRNA(Asx) + L-aspartate + ATP = L-aspartyl-tRNA(Asx) + AMP + diphosphate. In terms of biological role, aspartyl-tRNA synthetase with relaxed tRNA specificity since it is able to aspartylate not only its cognate tRNA(Asp) but also tRNA(Asn). Reaction proceeds in two steps: L-aspartate is first activated by ATP to form Asp-AMP and then transferred to the acceptor end of tRNA(Asp/Asn). This chain is Aspartate--tRNA(Asp/Asn) ligase, found in Chlorobium phaeobacteroides (strain DSM 266 / SMG 266 / 2430).